The following is an 89-amino-acid chain: Aminoacyl carrier protein 2 (89 aa).

The Carrier domain occupies 6 to 84 (INVQNRVLSV…AMERMILNQL (79 aa)). Ser42 is modified (O-(pantetheine 4'-phosphoryl)serine).

4'-phosphopantetheine is transferred from CoA to a specific serine of the apo-form of this carrier protein.

In terms of biological role, aminoacyl carrier protein. Can be charged with L-glycine via the formation of a thioester bond between the amino acid and the 4'-phosphopantetheinyl prosthetic group, catalyzed by the bll6282 ligase. The sequence is that of Aminoacyl carrier protein 2 from Bradyrhizobium diazoefficiens (strain JCM 10833 / BCRC 13528 / IAM 13628 / NBRC 14792 / USDA 110).